The sequence spans 1252 residues: DNA-directed RNA polymerase subunit beta (1252 aa).

The protein belongs to the RNA polymerase beta chain family. In terms of assembly, the RNAP catalytic core consists of 2 alpha, 1 beta, 1 beta' and 1 omega subunit. When a sigma factor is associated with the core the holoenzyme is formed, which can initiate transcription.

It catalyses the reaction RNA(n) + a ribonucleoside 5'-triphosphate = RNA(n+1) + diphosphate. DNA-dependent RNA polymerase catalyzes the transcription of DNA into RNA using the four ribonucleoside triphosphates as substrates. The chain is DNA-directed RNA polymerase subunit beta from Chlamydia abortus (strain DSM 27085 / S26/3) (Chlamydophila abortus).